A 1187-amino-acid polypeptide reads, in one-letter code: DNA-directed RNA polymerase subunit beta (1187 aa).

The disordered stretch occupies residues 1150–1187; that stretch reads KDEDDDPASSADDLGFNIGARPDAAAKEDQKAEEPEYQ. The segment covering 1173-1187 has biased composition (basic and acidic residues); that stretch reads AAAKEDQKAEEPEYQ.

The protein belongs to the RNA polymerase beta chain family. The RNAP catalytic core consists of 2 alpha, 1 beta, 1 beta' and 1 omega subunit. When a sigma factor is associated with the core the holoenzyme is formed, which can initiate transcription.

The enzyme catalyses RNA(n) + a ribonucleoside 5'-triphosphate = RNA(n+1) + diphosphate. In terms of biological role, DNA-dependent RNA polymerase catalyzes the transcription of DNA into RNA using the four ribonucleoside triphosphates as substrates. This chain is DNA-directed RNA polymerase subunit beta, found in Bifidobacterium longum (strain DJO10A).